Consider the following 428-residue polypeptide: Glucose-1-phosphate adenylyltransferase (428 aa).

Alpha-D-glucose 1-phosphate-binding positions include Tyr114, Gly179, 194 to 195, and Ser212; that span reads EK.

The protein belongs to the bacterial/plant glucose-1-phosphate adenylyltransferase family. In terms of assembly, homotetramer.

It catalyses the reaction alpha-D-glucose 1-phosphate + ATP + H(+) = ADP-alpha-D-glucose + diphosphate. It functions in the pathway glycan biosynthesis; glycogen biosynthesis. Involved in the biosynthesis of ADP-glucose, a building block required for the elongation reactions to produce glycogen. Catalyzes the reaction between ATP and alpha-D-glucose 1-phosphate (G1P) to produce pyrophosphate and ADP-Glc. In Yersinia pseudotuberculosis serotype O:1b (strain IP 31758), this protein is Glucose-1-phosphate adenylyltransferase.